A 21-amino-acid polypeptide reads, in one-letter code: CLGVGSCNDFAGCGYAIVCFW.

A cross-link (3-cysteinyl-aspartic acid (Cys-Asp)) is located at residues 1-9; it reads CLGVGSCND. 2 disulfide bridges follow: Cys1/Cys13 and Cys7/Cys19. Trp21 carries the post-translational modification D-tryptophan.

Its function is as follows. Inhibits chicken myosin light chain kinase with an IC(50) of 8 M. Does not inhibit bovine cAMP-dependent protein kinase or rat protein kinase C. Antibacterial activity against the Gram-positive bacteria B.subtilis, E.faecium and S.aureus. No antibacterial activity against the Gram-negative bacteria E.coli, K.pneumoniae, P.aeruginosa, P.vulgaris, S.sonnei and S.typhosa. No antifungal activity against C.albicans. This Streptomyces sp protein is Tricyclic peptide MS-271.